The sequence spans 85 residues: HssA/B-like protein 62 (85 aa).

It belongs to the hssA/B family.

The polypeptide is HssA/B-like protein 62 (hssl62) (Dictyostelium discoideum (Social amoeba)).